The chain runs to 422 residues: Serine--tRNA ligase (422 aa).

Position 229-231 (229-231 (TAE)) interacts with L-serine. An ATP-binding site is contributed by 260–262 (RAE). Position 283 (Glu283) interacts with L-serine. An ATP-binding site is contributed by 347–350 (EISS). Ser383 is a binding site for L-serine.

Belongs to the class-II aminoacyl-tRNA synthetase family. Type-1 seryl-tRNA synthetase subfamily. Homodimer. The tRNA molecule binds across the dimer.

It is found in the cytoplasm. The enzyme catalyses tRNA(Ser) + L-serine + ATP = L-seryl-tRNA(Ser) + AMP + diphosphate + H(+). It carries out the reaction tRNA(Sec) + L-serine + ATP = L-seryl-tRNA(Sec) + AMP + diphosphate + H(+). The protein operates within aminoacyl-tRNA biosynthesis; selenocysteinyl-tRNA(Sec) biosynthesis; L-seryl-tRNA(Sec) from L-serine and tRNA(Sec): step 1/1. In terms of biological role, catalyzes the attachment of serine to tRNA(Ser). Is also able to aminoacylate tRNA(Sec) with serine, to form the misacylated tRNA L-seryl-tRNA(Sec), which will be further converted into selenocysteinyl-tRNA(Sec). The sequence is that of Serine--tRNA ligase from Halothermothrix orenii (strain H 168 / OCM 544 / DSM 9562).